The chain runs to 474 residues: 2-succinylbenzoate--CoA ligase (474 aa).

The protein belongs to the ATP-dependent AMP-binding enzyme family. MenE subfamily.

It catalyses the reaction 2-succinylbenzoate + ATP + CoA = 2-succinylbenzoyl-CoA + AMP + diphosphate. It functions in the pathway quinol/quinone metabolism; 1,4-dihydroxy-2-naphthoate biosynthesis; 1,4-dihydroxy-2-naphthoate from chorismate: step 5/7. The protein operates within quinol/quinone metabolism; menaquinone biosynthesis. Converts 2-succinylbenzoate (OSB) to 2-succinylbenzoyl-CoA (OSB-CoA). This is 2-succinylbenzoate--CoA ligase from Staphylococcus epidermidis (strain ATCC 12228 / FDA PCI 1200).